Consider the following 228-residue polypeptide: 3-oxoadipate CoA-transferase subunit A (228 aa).

25–31 (GGFGTAG) is a CoA binding site.

The protein belongs to the 3-oxoacid CoA-transferase subunit A family. As to quaternary structure, heterodimer.

The enzyme catalyses 3-oxoadipate + succinyl-CoA = 3-oxoadipyl-CoA + succinate. It participates in aromatic compound metabolism; beta-ketoadipate pathway; acetyl-CoA and succinyl-CoA from 3-oxoadipate: step 1/2. The protein is 3-oxoadipate CoA-transferase subunit A (pcaI) of Acinetobacter baylyi (strain ATCC 33305 / BD413 / ADP1).